The chain runs to 317 residues: Methionyl-tRNA formyltransferase (317 aa).

112–115 (SLLP) contributes to the (6S)-5,6,7,8-tetrahydrofolate binding site.

The protein belongs to the Fmt family.

It catalyses the reaction L-methionyl-tRNA(fMet) + (6R)-10-formyltetrahydrofolate = N-formyl-L-methionyl-tRNA(fMet) + (6S)-5,6,7,8-tetrahydrofolate + H(+). Functionally, attaches a formyl group to the free amino group of methionyl-tRNA(fMet). The formyl group appears to play a dual role in the initiator identity of N-formylmethionyl-tRNA by promoting its recognition by IF2 and preventing the misappropriation of this tRNA by the elongation apparatus. The chain is Methionyl-tRNA formyltransferase from Mesorhizobium japonicum (strain LMG 29417 / CECT 9101 / MAFF 303099) (Mesorhizobium loti (strain MAFF 303099)).